Here is a 452-residue protein sequence, read N- to C-terminus: GTPase Der (452 aa).

EngA-type G domains follow at residues 4 to 169 and 177 to 352; these read PIVA…PAPQ and IKVA…QEHR. GTP is bound by residues 10-17, 57-61, 120-123, 183-190, 230-234, and 295-298; these read GRPNVGKS, DTGGL, NKCE, DTAGI, and NKWD. One can recognise a KH-like domain in the interval 353–439; it reads RRVTTAVINE…IRLFWRGKKV (87 aa).

Belongs to the TRAFAC class TrmE-Era-EngA-EngB-Septin-like GTPase superfamily. EngA (Der) GTPase family. As to quaternary structure, associates with the 50S ribosomal subunit.

Its function is as follows. GTPase that plays an essential role in the late steps of ribosome biogenesis. The chain is GTPase Der from Synechocystis sp. (strain ATCC 27184 / PCC 6803 / Kazusa).